Consider the following 245-residue polypeptide: 1-(5-phosphoribosyl)-5-[(5-phosphoribosylamino)methylideneamino] imidazole-4-carboxamide isomerase (245 aa).

Aspartate 8 (proton acceptor) is an active-site residue. Aspartate 131 acts as the Proton donor in catalysis.

Belongs to the HisA/HisF family.

The protein localises to the cytoplasm. The catalysed reaction is 1-(5-phospho-beta-D-ribosyl)-5-[(5-phospho-beta-D-ribosylamino)methylideneamino]imidazole-4-carboxamide = 5-[(5-phospho-1-deoxy-D-ribulos-1-ylimino)methylamino]-1-(5-phospho-beta-D-ribosyl)imidazole-4-carboxamide. It participates in amino-acid biosynthesis; L-histidine biosynthesis; L-histidine from 5-phospho-alpha-D-ribose 1-diphosphate: step 4/9. The protein is 1-(5-phosphoribosyl)-5-[(5-phosphoribosylamino)methylideneamino] imidazole-4-carboxamide isomerase of Verminephrobacter eiseniae (strain EF01-2).